We begin with the raw amino-acid sequence, 960 residues long: MADNNSSSGSLVIDEQDYDVHEAGQQGQQGQQKHQQRQQERPSLITRVFRSVFGYRKTSLSLFVVATIALCVSLSYIDNSVDFISFPTVESEVNLLNAAWLDLQVIAKEQHPYGSIGNDRVHDFLERRIQELITGANFITWDNDINGNNSFMFESSSNPKTVSYYESNNLLVKIEGKNAKLPGILLSSHFDSVPTSYGVTDDGMGVASMLGILNYFSQQKKQPERTIVMNFNNNEEFGLLGATAFTRHPWFKLVKYFLNLEGTGAGGKAILFRATDYGIAKYFQNVRTPYASSIFQQGFANGLVHSETDYKVYKEAGMRGLDLAFFKPRDYYHTAEDNIRRTSEKSLWHMLSNSLDFIDYLSKDKEFGMNLEEKPNLLEEPAVFASFLNYFFTISTSQLFKINVALLTVFPILNGLLLLYTIRSRKWQVSFSSAISIPVALLVTMFIVVYLVVESYKSFNQYLPSSRPLLLVATITSILLLVFSIILVAFSFFSIIAEENLRLLAIVELSFAYWVGLAFTTHGLSGAESARHSGEFAVSILFTLEAVASFLGLIGWSLCRNRSHLQVAEGESVPLLNGIDARYSSDNDHDHEHRHGHEDNEHGEAHVQQQSQSRHKKQCKETVHSFGYDWSLQYLITVPLSIFIIYNSGWLVLEGVNKTLQESAKAETFVYNLLWIVSVSLVLPLIPFAGKLNRYMVFVLIAIGVLGTLLVHVVQPFNEANPLKLRFLQRIDGKNNASSVHVYARKGLATEVLEQLPSVRQSNETIHCSQLADGMEDCSFVSALAPQILPGYELGNYIEVTNNGSAPSQLFGVNYNQIKIVALKSQSCSLHFGDSKVKAVVVGSSLESAPAFKHLPSGYSFNKDHFYKDTSGIWNLTLNKLDSHSSFDISLYWLPGIDDEANTLQFDVECFWADLSPVALNNTVFEAIPAFNEVQQYSPISVSWANREKGLVAYTKQVHV.

Residues methionine 1 to lysine 57 lie on the Cytoplasmic side of the membrane. Positions glutamate 22–arginine 41 are disordered. Residues glycine 24 to lysine 33 show a composition bias toward low complexity. A helical transmembrane segment spans residues threonine 58 to aspartate 78. Over asparagine 79–lysine 401 the chain is Vacuolar. Residue asparagine 148 is glycosylated (N-linked (GlcNAc...) asparagine). Histidine 189 and aspartate 201 together coordinate Zn(2+). Glutamate 235 serves as the catalytic Proton acceptor. Zn(2+)-binding residues include glutamate 236, glutamate 261, and histidine 333. Residues isoleucine 402–isoleucine 422 traverse the membrane as a helical segment. Topologically, residues arginine 423–serine 432 are cytoplasmic. A helical transmembrane segment spans residues serine 433–valine 453. The Vacuolar segment spans residues glutamate 454 to threonine 476. The helical transmembrane segment at serine 477–alanine 497 threads the bilayer. Residues glutamate 498 to arginine 502 lie on the Cytoplasmic side of the membrane. Residues leucine 503–glycine 523 form a helical membrane-spanning segment. At leucine 524–glutamate 535 the chain is on the vacuolar side. A helical membrane pass occupies residues phenylalanine 536–tryptophan 556. Over serine 557–leucine 635 the chain is Cytoplasmic. The span at asparagine 587 to alanine 605 shows a compositional bias: basic and acidic residues. The tract at residues asparagine 587–arginine 614 is disordered. The helical transmembrane segment at isoleucine 636–valine 656 threads the bilayer. Asparagine 657 is a glycosylation site (N-linked (GlcNAc...) asparagine). The Vacuolar segment spans residues asparagine 657 to threonine 668. A helical membrane pass occupies residues phenylalanine 669–alanine 689. The Cytoplasmic segment spans residues glycine 690 to methionine 696. The helical transmembrane segment at valine 697–phenylalanine 717 threads the bilayer. The Vacuolar portion of the chain corresponds to asparagine 718–valine 960. Asparagine 736, asparagine 763, asparagine 803, asparagine 875, and asparagine 921 each carry an N-linked (GlcNAc...) asparagine glycan.

Belongs to the peptidase M28 family. Zn(2+) is required as a cofactor.

The protein resides in the vacuole membrane. Functionally, may be involved in vacuolar sorting and osmoregulation. This Lodderomyces elongisporus (strain ATCC 11503 / CBS 2605 / JCM 1781 / NBRC 1676 / NRRL YB-4239) (Yeast) protein is Vacuolar membrane protease.